Reading from the N-terminus, the 533-residue chain is Flavin-containing monooxygenase 5 (533 aa).

Arginine 5 bears the Dimethylated arginine mark. FAD contacts are provided by residues 10–14 (GAGAS), glutamate 33, and 41–42 (LW). Serine 54 carries the phosphoserine modification. Tyrosine 56 carries the phosphotyrosine modification. Position 58 is a phosphoserine (serine 58). 62–63 (NT) provides a ligand contact to FAD. 196–199 (SGGD) provides a ligand contact to NADP(+). At serine 280 the chain carries Phosphoserine. The residue at position 284 (threonine 284) is a Phosphothreonine. Residue serine 401 is modified to Phosphoserine. A helical membrane pass occupies residues 513–533 (MMTMGKFMLAIAFLAIAVVYF).

Belongs to the FMO family. Requires FAD as cofactor. As to expression, kidney and liver.

It is found in the microsome membrane. It localises to the endoplasmic reticulum membrane. The enzyme catalyses N,N-dimethylaniline + NADPH + O2 + H(+) = N,N-dimethylaniline N-oxide + NADP(+) + H2O. It carries out the reaction NADPH + O2 + H(+) = H2O2 + NADP(+). It catalyses the reaction heptan-2-one + NADPH + O2 + H(+) = pentyl acetate + NADP(+) + H2O. The catalysed reaction is octan-3-one + NADPH + O2 + H(+) = pentyl propanoate + NADP(+) + H2O. The enzyme catalyses octan-3-one + NADPH + O2 + H(+) = ethyl hexanoate + NADP(+) + H2O. It carries out the reaction hexan-3-one + NADPH + O2 + H(+) = ethyl butanoate + NADP(+) + H2O. It catalyses the reaction hexan-3-one + NADPH + O2 + H(+) = propyl propanoate + NADP(+) + H2O. The catalysed reaction is heptan-4-one + NADPH + O2 + H(+) = propyl butanoate + NADP(+) + H2O. The enzyme catalyses (2E)-geranial + NADPH + O2 + H(+) = (1E)-2,6-dimethylhepta-1,5-dien-1-yl formate + NADP(+) + H2O. It carries out the reaction sulcatone + NADPH + O2 + H(+) = 4-methylpent-3-en-1-yl acetate + NADP(+) + H2O. Functionally, acts as a Baeyer-Villiger monooxygenase on a broad range of substrates. Catalyzes the insertion of an oxygen atom into a carbon-carbon bond adjacent to a carbonyl, which converts ketones to esters. Active on diverse carbonyl compounds, whereas soft nucleophiles are mostly non- or poorly reactive. In contrast with other forms of FMO it is non- or poorly active on 'classical' substrates such as drugs, pesticides, and dietary components containing soft nucleophilic heteroatoms. Able to oxidize drug molecules bearing a carbonyl group on an aliphatic chain, such as nabumetone and pentoxifylline. Also, in the absence of substrates, shows slow but yet significant NADPH oxidase activity. Acts as a positive modulator of cholesterol biosynthesis as well as glucose homeostasis, promoting metabolic aging via pleiotropic effects. This is Flavin-containing monooxygenase 5 (FMO5) from Oryctolagus cuniculus (Rabbit).